The sequence spans 452 residues: Glutamyl-tRNA(Gln) amidotransferase subunit A (452 aa).

Catalysis depends on charge relay system residues Lys-56 and Ser-131. The active-site Acyl-ester intermediate is Ser-155.

Belongs to the amidase family. GatA subfamily. Heterotrimer of A, B and C subunits.

It carries out the reaction L-glutamyl-tRNA(Gln) + L-glutamine + ATP + H2O = L-glutaminyl-tRNA(Gln) + L-glutamate + ADP + phosphate + H(+). In terms of biological role, allows the formation of correctly charged Gln-tRNA(Gln) through the transamidation of misacylated Glu-tRNA(Gln) in organisms which lack glutaminyl-tRNA synthetase. The reaction takes place in the presence of glutamine and ATP through an activated gamma-phospho-Glu-tRNA(Gln). The polypeptide is Glutamyl-tRNA(Gln) amidotransferase subunit A (Campylobacter hominis (strain ATCC BAA-381 / DSM 21671 / CCUG 45161 / LMG 19568 / NCTC 13146 / CH001A)).